Reading from the N-terminus, the 281-residue chain is NADPH-dependent 7-cyano-7-deazaguanine reductase (281 aa).

Residue 88–90 (IES) participates in substrate binding. Position 90–91 (90–91 (SK)) interacts with NADPH. Residue cysteine 189 is the Thioimide intermediate of the active site. Aspartate 196 serves as the catalytic Proton donor. 228 to 229 (HE) contacts substrate. Position 257-258 (257-258 (RG)) interacts with NADPH.

This sequence belongs to the GTP cyclohydrolase I family. QueF type 2 subfamily. As to quaternary structure, homodimer.

The protein resides in the cytoplasm. It carries out the reaction 7-aminomethyl-7-carbaguanine + 2 NADP(+) = 7-cyano-7-deazaguanine + 2 NADPH + 3 H(+). Its pathway is tRNA modification; tRNA-queuosine biosynthesis. Its function is as follows. Catalyzes the NADPH-dependent reduction of 7-cyano-7-deazaguanine (preQ0) to 7-aminomethyl-7-deazaguanine (preQ1). The protein is NADPH-dependent 7-cyano-7-deazaguanine reductase of Yersinia pseudotuberculosis serotype O:1b (strain IP 31758).